The following is a 202-amino-acid chain: Holliday junction resolvase RecU (202 aa).

Residues Thr85, Asp87, Glu100, and Gln119 each coordinate Mg(2+).

This sequence belongs to the RecU family. Mg(2+) serves as cofactor.

The protein localises to the cytoplasm. The enzyme catalyses Endonucleolytic cleavage at a junction such as a reciprocal single-stranded crossover between two homologous DNA duplexes (Holliday junction).. Endonuclease that resolves Holliday junction intermediates in genetic recombination. Cleaves mobile four-strand junctions by introducing symmetrical nicks in paired strands. Promotes annealing of linear ssDNA with homologous dsDNA. Required for DNA repair, homologous recombination and chromosome segregation. The sequence is that of Holliday junction resolvase RecU from Streptococcus uberis (strain ATCC BAA-854 / 0140J).